A 439-amino-acid chain; its full sequence is Adenylosuccinate synthetase (439 aa).

GTP-binding positions include 25–31, 53–55, and Lys62; these read GDEGKGK and GHT. Asp26 serves as the catalytic Proton acceptor. 2 residues coordinate Mg(2+): Asp26 and Gly53. Residues 26 to 29 and 51 to 54 contribute to the IMP site; these read DEGK and NAGH. The active-site Proton donor is the His54. IMP contacts are provided by Thr141, Arg155, Asn232, and Thr247. Thr307 serves as a coordination point for GTP. 307 to 313 is a substrate binding site; the sequence is TTTNRPR. Residue Arg311 participates in IMP binding. GTP contacts are provided by residues Arg313, 339–341, and 425–427; these read KLD and GVG.

This sequence belongs to the adenylosuccinate synthetase family. In terms of assembly, homodimer. Requires Mg(2+) as cofactor.

The protein localises to the cytoplasm. It carries out the reaction IMP + L-aspartate + GTP = N(6)-(1,2-dicarboxyethyl)-AMP + GDP + phosphate + 2 H(+). It participates in purine metabolism; AMP biosynthesis via de novo pathway; AMP from IMP: step 1/2. Its function is as follows. Plays an important role in the salvage pathway for purine nucleotide biosynthesis. Catalyzes the first commited step in the biosynthesis of AMP from IMP. In Plasmodium chabaudi chabaudi, this protein is Adenylosuccinate synthetase.